The primary structure comprises 253 residues: CENP-A recruiting complex protein mis20 (253 aa).

The tract at residues 113–136 is disordered; that stretch reads TGPTTSKNKHPSHSNTIRSPPYKV.

Component of the CENP-A recruiting complex composed of at least mis16, mis19, mis19 and mis20.

The protein resides in the cytoplasm. The protein localises to the cytoskeleton. It is found in the microtubule organizing center. It localises to the spindle pole body. Its subcellular location is the chromosome. The protein resides in the centromere. Its function is as follows. Component of the CENP-A recruiting complex that ensures the integrity of mitotic spindles through maintenance of kinetochore factors mis6/CENP-I and cnp1/CENP-A. Seems dispensable for proper chromosome segregation. The sequence is that of CENP-A recruiting complex protein mis20 from Schizosaccharomyces pombe (strain 972 / ATCC 24843) (Fission yeast).